The sequence spans 696 residues: SLIT and NTRK-like protein 1 (696 aa).

An N-terminal signal peptide occupies residues 1-17; it reads MLLWILLLETSLCFAAG. The region spanning 18–57 is the LRRNT 1 domain; the sequence is NVTGDVCKEKICSCNEIEGDLHVDCEKKGFTSLQRFTAPT. The Extracellular portion of the chain corresponds to 18–622; sequence NVTGDVCKEK…SRVSISVLVP (605 aa). LRR repeat units follow at residues 59–80, 83–104, 106–128, 131–152, 155–176, and 178–199; these read QFYH…EFAN, NAVS…AFLG, QLVK…TFLG, DLEY…AFQD, KLEV…VFQY, and PITH…EVLE. The region spanning 212–263 is the LRRCT 1 domain; sequence NPWDCTCDLLSLKEWLENIPKNALIGRVVCEAPTRLQGKDLNETTEQDLCPL. Positions 265–314 are disordered; the sequence is NRVDSSLPAPPAQEETFAPGPLPTPFKTNGQEDHATPGSAPNGGTKIPGN. One can recognise an LRRNT 2 domain in the interval 332–373; sequence NKPLANSLPCPGGCSCDHIPGSGLKMNCNNRNVSSLADLKPK. LRR repeat units lie at residues 376–397, 400–421, 424–445, 448–469, 472–493, and 495–516; these read NVQE…HFVD, NLIL…TFKN, DLRW…KFAG, NLEY…TFNA, KLRI…VFAG, and SLSK…GVLD. In terms of domain architecture, LRRCT 2 spans 529–580; the sequence is NPWECSCTIVPFKQWAERLGSEVLMSDLKCETPVNFFRKDFMLLSNDEICPQ. A helical membrane pass occupies residues 623–643; the sequence is GLLLVFVTSAFTVVGMLVFIL. Residues 644-696 are Cytoplasmic-facing; it reads RNRKRSKRRDANSSASEINSLQTVCDSSYWHNGPYNADGAHRVYDCGSHSLSD. A Phosphoserine; by CK2 modification is found at Ser695.

It belongs to the SLITRK family. Can form homodimers; homodimerization requires repeat LRR 2. Interacts with YWHAB, YWHAE, YWHAG, YWHAH, SFN, YWHAQ and YWHAZ. In terms of processing, undergoes proteolytic cleavage that results in shedding of the ectodomain and cleavage of the C-terminal cytoplasmic tail. Glycosylated. Phosphorylation at Ser-695 is necessary for proper function in promoting neurite outgrowth. In terms of tissue distribution, expressed predominantly in the frontal lobe of the cerebral cortex of the brain. Also expressed in some astrocytic brain tumors such as astrocytomas, oligodendrogliomas, glioblastomas, gangliogliomas and primitive neuroectodermal tumors.

The protein resides in the membrane. It localises to the secreted. Its subcellular location is the synapse. It is involved in synaptogenesis and promotes excitatory synapse differentiation. Enhances neuronal dendrite outgrowth. The protein is SLIT and NTRK-like protein 1 (SLITRK1) of Homo sapiens (Human).